The following is a 774-amino-acid chain: Transforming acidic coiled-coil-containing protein 1 (774 aa).

The residue at position 2 (A2) is an N-acetylalanine. The segment at 2 to 56 is interaction with LSM7 and SNRPG; it reads AFSPWQILSPVQWAKWTWSAVRGSGAGEDEAGGPEGDPEEEEDSQAETKSLSFSS. A phosphoserine mark is found at S4, S10, and S45. The disordered stretch occupies residues 21-142; the sequence is AVRGSGAGED…VKDVRGKAEH (122 aa). A compositionally biased stretch (acidic residues) spans 28 to 46; it reads GEDEAGGPEGDPEEEEDSQ. A compositionally biased stretch (polar residues) spans 48-61; sequence ETKSLSFSSDSEGN. A compositionally biased stretch (basic and acidic residues) spans 88–99; it reads PEAKPQESREAD. A compositionally biased stretch (polar residues) spans 113 to 128; sequence DTCSRSSENEAPQATV. A compositionally biased stretch (basic and acidic residues) spans 131 to 142; that stretch reads HPVKDVRGKAEH. Residues S148 and S154 each carry the phosphoserine modification. Residues 153–255 form an interaction with TDRD7 region; it reads FSIETRNCTD…PEMLMEGSPL (103 aa). An interaction with YEATS4 region spans residues 207-424; sequence EAFTEASLKT…NNINTDDSGD (218 aa). A disordered region spans residues 214 to 428; the sequence is LKTGGPCPEP…TDDSGDPCKP (215 aa). SPAZ domains lie at 216–294 and 354–504; these read TGGP…TAGV and SKPV…TDEE. At S228 the chain carries Phosphoserine; by AURKC. Positions 228 to 241 are enriched in basic residues; it reads SKLRKPKPVSLRKK. S376 and S401 each carry phosphoserine. Polar residues predominate over residues 397–407; the sequence is ILQNSPPLSSK. The short motif at 452-468 is the Bipartite nuclear localization signal element; that stretch reads PKKAKSRLITSGCKVKK. Phosphoserine is present on residues S480 and S560. A coiled-coil region spans residues 579 to 774; the sequence is IREEIITKEI…ELIAKLGKTD (196 aa). Positions 670–774 are interaction with CH-TOG; the sequence is VLEGFKKNEE…ELIAKLGKTD (105 aa).

Belongs to the TACC family. As to quaternary structure, interacts with CH-TOG and YEATS4. Interacts with the AURKA and AURKB and AURKC. Interacts with LSM7, TDRD7 and SNRPG. Interacts with GCN5L2 and PCAF. Interacts with the thyroid hormone receptors THRB and THRA, predominantly with isoform alpha-2. The interaction with THRA isoform alpha-1 and THRB is decreased in the presence of thyroid hormone T3. Interacts with RARA in the nucleus. Also interacts with other nuclear receptors, including ESR1, NR3C1, PPARG and RXRA, preferentially in the absence of their hormonal ligands.

Its subcellular location is the cytoplasm. It is found in the nucleus. The protein localises to the cytoskeleton. The protein resides in the microtubule organizing center. It localises to the centrosome. Its subcellular location is the midbody. Functionally, involved in transcription regulation induced by nuclear receptors, including in T3 thyroid hormone and all-trans retinoic acid pathways. Might promote the nuclear localization of the receptors. Likely involved in the processes that promote cell division prior to the formation of differentiated tissues. The polypeptide is Transforming acidic coiled-coil-containing protein 1 (Tacc1) (Mus musculus (Mouse)).